We begin with the raw amino-acid sequence, 107 residues long: Small ribosomal subunit protein uS17 (107 aa).

This sequence belongs to the universal ribosomal protein uS17 family. As to quaternary structure, part of the 30S ribosomal subunit.

In terms of biological role, one of the primary rRNA binding proteins, it binds specifically to the 5'-end of 16S ribosomal RNA. This is Small ribosomal subunit protein uS17 from Aquifex aeolicus (strain VF5).